We begin with the raw amino-acid sequence, 227 residues long: 2-C-methyl-D-erythritol 4-phosphate cytidylyltransferase (227 aa).

The protein belongs to the IspD/TarI cytidylyltransferase family. IspD subfamily.

It carries out the reaction 2-C-methyl-D-erythritol 4-phosphate + CTP + H(+) = 4-CDP-2-C-methyl-D-erythritol + diphosphate. The protein operates within isoprenoid biosynthesis; isopentenyl diphosphate biosynthesis via DXP pathway; isopentenyl diphosphate from 1-deoxy-D-xylulose 5-phosphate: step 2/6. In terms of biological role, catalyzes the formation of 4-diphosphocytidyl-2-C-methyl-D-erythritol from CTP and 2-C-methyl-D-erythritol 4-phosphate (MEP). The sequence is that of 2-C-methyl-D-erythritol 4-phosphate cytidylyltransferase from Bordetella bronchiseptica (strain ATCC BAA-588 / NCTC 13252 / RB50) (Alcaligenes bronchisepticus).